We begin with the raw amino-acid sequence, 461 residues long: ATP synthase subunit beta (461 aa).

151–158 (GGAGVGKT) is a binding site for ATP.

Belongs to the ATPase alpha/beta chains family. As to quaternary structure, F-type ATPases have 2 components, CF(1) - the catalytic core - and CF(0) - the membrane proton channel. CF(1) has five subunits: alpha(3), beta(3), gamma(1), delta(1), epsilon(1). CF(0) has three main subunits: a(1), b(2) and c(9-12). The alpha and beta chains form an alternating ring which encloses part of the gamma chain. CF(1) is attached to CF(0) by a central stalk formed by the gamma and epsilon chains, while a peripheral stalk is formed by the delta and b chains.

Its subcellular location is the cell inner membrane. The catalysed reaction is ATP + H2O + 4 H(+)(in) = ADP + phosphate + 5 H(+)(out). Its function is as follows. Produces ATP from ADP in the presence of a proton gradient across the membrane. The catalytic sites are hosted primarily by the beta subunits. This is ATP synthase subunit beta from Coxiella burnetii (strain RSA 331 / Henzerling II).